A 229-amino-acid chain; its full sequence is Ribonuclease 3 (229 aa).

The region spanning 3–125 is the RNase III domain; sequence VNALQEKLGY…LIGGIFLDSN (123 aa). Glutamate 38 serves as a coordination point for Mg(2+). The active site involves aspartate 42. The Mg(2+) site is built by asparagine 111 and glutamate 114. Residue glutamate 114 is part of the active site. One can recognise a DRBM domain in the interval 155–225; the sequence is DPKTRLQEYM…AAKVLEALEH (71 aa).

The protein belongs to the ribonuclease III family. Homodimer. Requires Mg(2+) as cofactor.

It localises to the cytoplasm. It catalyses the reaction Endonucleolytic cleavage to 5'-phosphomonoester.. Functionally, digests double-stranded RNA. Involved in the processing of primary rRNA transcript to yield the immediate precursors to the large and small rRNAs (23S and 16S). Processes some mRNAs, and tRNAs when they are encoded in the rRNA operon. Processes pre-crRNA and tracrRNA of type II CRISPR loci if present in the organism. The protein is Ribonuclease 3 of Blochmanniella pennsylvanica (strain BPEN).